The sequence spans 346 residues: MAHHPRWTLSQVTELFNKPLLDLLFDAQQIHRQHFDPQQVQVSTLLSIKTGACPEDCKYCPQSSRYKTGLEAERLMEVEQVLDSARKAKNAGSTRFCMGAAWKNPHERDMPYLEQMVQGVKAMGLEACMTLGTLNESQAQRLANAGLDYYNHNLDTSPEFYGNIITTRSYQERLDTLDKVREAGIKVCSGGIVGLGETVKDRAGLLLQLANLPTPPESVPINMLVKVKGTPLADNEDVDAFDFIRTIAVARIMMPTSYVRLSAGREQMNEQTQAMCFMAGANSIFYGCKLLTTPNPEEDKDLQLFRKLGLNPQQTSVLAGDNEQQQRLEQALMTPDTDDYYNAAAV.

Residues 38 to 256 (QQVQVSTLLS…IAVARIMMPT (219 aa)) form the Radical SAM core domain. [4Fe-4S] cluster is bound by residues Cys53, Cys57, and Cys60. Residues Cys97, Cys128, Cys188, and Arg260 each contribute to the [2Fe-2S] cluster site.

Belongs to the radical SAM superfamily. Biotin synthase family. In terms of assembly, homodimer. It depends on [4Fe-4S] cluster as a cofactor. [2Fe-2S] cluster is required as a cofactor.

It carries out the reaction (4R,5S)-dethiobiotin + (sulfur carrier)-SH + 2 reduced [2Fe-2S]-[ferredoxin] + 2 S-adenosyl-L-methionine = (sulfur carrier)-H + biotin + 2 5'-deoxyadenosine + 2 L-methionine + 2 oxidized [2Fe-2S]-[ferredoxin]. Its pathway is cofactor biosynthesis; biotin biosynthesis; biotin from 7,8-diaminononanoate: step 2/2. Functionally, catalyzes the conversion of dethiobiotin (DTB) to biotin by the insertion of a sulfur atom into dethiobiotin via a radical-based mechanism. In Citrobacter koseri (strain ATCC BAA-895 / CDC 4225-83 / SGSC4696), this protein is Biotin synthase.